The following is a 262-amino-acid chain: Aminoglycoside (3'') (9) adenylyltransferase (262 aa).

The enzyme catalyses streptomycin + ATP = 3''-O-adenylylstreptomycin + diphosphate. It catalyses the reaction spectinomycin + ATP = 9-O-adenylylspectinomycin + diphosphate. Mediates bacterial resistance to the antibiotics streptomycin and spectinomycin. The polypeptide is Aminoglycoside (3'') (9) adenylyltransferase (Shigella flexneri).